The following is a 466-amino-acid chain: MSSTQVGNALSSSTTTLVDLSNSTVTQKKQYYKDGETLHNLLLELKNNQDLELLPHEQAHPKIFQALKARIGRINNETCDPGEENSFFICDLGEVKRLFNNWVKELPRIKPFYAVKCNPDTKVLSLLAELGVNFDCASKVEIDRVLSMNISPDRIVYANPCKVASFIRYAASKNVMKSTFDNVEELHKIKKFHPESQLLLRIATDDSTAQCRLSTKYGCEMENVDVLLKAIKELGLNLAGVSFHVGSGASDFTSLYKAVRDARTVFDKAANEYGLPPLKILDVGGGFQFESFKESTAVLRLALEEFFPVGCGVDIIAEPGRYFVATAFTLASHVIAKRKLSENEAMIYTNDGVYGNMNCILFDHQEPHPRTLYHNLEFHYDDFESTTAVLDSINKTRSEYPYKVSIWGPTCDGLDCIAKEYYMKHDVIVGDWFYFPALGAYTSSAATQFNGFEQTADIVYIDSELD.

Residue Lys116 is modified to N6-(pyridoxal phosphate)lysine. Pyridoxal 5'-phosphate-binding positions include Ser247, Gly286, and 318 to 321 (EPGR). 362–363 (FD) provides a ligand contact to substrate. Cys411 serves as the catalytic Proton donor; shared with dimeric partner. Substrate is bound at residue Asp412. Tyr441 provides a ligand contact to pyridoxal 5'-phosphate.

It belongs to the Orn/Lys/Arg decarboxylase class-II family. Homodimer. Only the dimer is catalytically active, as the active sites are constructed of residues from both monomers. The cofactor is pyridoxal 5'-phosphate.

It is found in the cytoplasm. The enzyme catalyses L-ornithine + H(+) = putrescine + CO2. The protein operates within amine and polyamine biosynthesis; putrescine biosynthesis via L-ornithine pathway; putrescine from L-ornithine: step 1/1. Inhibited by antizyme (AZ) OAZ1 in response to polyamine levels. AZ inhibits the assembly of the functional homodimer by binding to ODC monomers and targeting them for ubiquitin-independent proteolytic destruction by the 26S proteasome. In terms of biological role, catalyzes the first and rate-limiting step of polyamine biosynthesis that converts ornithine into putrescine, which is the precursor for the polyamines, spermidine and spermine. Polyamines are essential for cell proliferation and are implicated in cellular processes, ranging from DNA replication to apoptosis. The protein is Ornithine decarboxylase of Saccharomyces cerevisiae (strain ATCC 204508 / S288c) (Baker's yeast).